The sequence spans 201 residues: UPF0637 protein LCA_0842 (201 aa).

Belongs to the UPF0637 family.

The sequence is that of UPF0637 protein LCA_0842 from Latilactobacillus sakei subsp. sakei (strain 23K) (Lactobacillus sakei subsp. sakei).